The sequence spans 277 residues: Tumor necrosis factor-inducible gene 6 protein (277 aa).

The signal sequence occupies residues 1 to 17 (MIILIYLFLLLWEDTQG). Residues 36–129 (GVYHREARSG…SERWDAYCYN (94 aa)) enclose the Link domain. Disulfide bonds link Cys58-Cys127, Cys82-Cys103, and Cys135-Cys161. An N-linked (GlcNAc...) asparagine glycan is attached at Asn118. The 113-residue stretch at 135–247 (CGGVFTDPKQ…GGFQIKYVAM (113 aa)) folds into the CUB domain. Residues Glu183, Asp191, Asp232, Ser234, and Val235 each contribute to the Ca(2+) site. The cysteines at positions 188 and 210 are disulfide-linked. Asn258 carries N-linked (GlcNAc...) asparagine glycosylation.

As to quaternary structure, interacts (via Link domain) with inter-alpha-inhibitor (I-alpha-I) component bikunin. Interacts with ITIH2/HC2; this interaction is required for transesterification of the HC to hyaluronan. Interacts (via Link and CUB domains) with ITIH1. Chondroitin sulfate may be required for the stability of the complex. Interacts (via Link domain) with various C-X-C and C-C chemokines including PF4, CXCL8, CXCL11, CXCL12, CCL2, CCL7, CCL19, CCL21, and CCL27; this interaction interferes with chemokine binding to glycosaminoglycans. Interacts (primarily via Link domain) with BMP2; this interaction is inhibited by hyaluronan. Interacts (via both Link and CUB domains) with TNFSF11. Interacts (via CUB domain) with FN1 (via type III repeats 9-14); this interaction enhances fibronectin fibril assembly. TNFAIP6 may act as a bridging molecule between FN1 and THBS1. N-glycosylated. In terms of tissue distribution, expressed in airway epithelium and submucosal gland (at protein level). Colocalizes with bikunin at the ciliary border. Present in bronchoalveolar lavage fluid (at protein level). Expressed in mesenchymal stem cells. Found in the synovial fluid of patients with rheumatoid arthritis.

It is found in the secreted. Its function is as follows. Major regulator of extracellular matrix organization during tissue remodeling. Catalyzes the transfer of a heavy chain (HC) from inter-alpha-inhibitor (I-alpha-I) complex to hyaluronan. Cleaves the ester bond between the C-terminus of the HC and GalNAc residue of the chondroitin sulfate chain in I-alpha-I complex followed by transesterification of the HC to hyaluronan. In the process, potentiates the antiprotease function of I-alpha-I complex through release of free bikunin. Acts as a catalyst in the formation of hyaluronan-HC oligomers and hyaluronan-rich matrix surrounding the cumulus cell-oocyte complex, a necessary step for oocyte fertilization. Assembles hyaluronan in pericellular matrices that serve as platforms for receptor clustering and signaling. Enables binding of hyaluronan deposited on the surface of macrophages to LYVE1 on lymphatic endothelium and facilitates macrophage extravasation. Alters hyaluronan binding to functionally latent CD44 on vascular endothelium, switching CD44 into an active state that supports leukocyte rolling. Modulates the interaction of chemokines with extracellular matrix components and proteoglycans on endothelial cell surface, likely preventing chemokine gradient formation. In a negative feedback mechanism, may limit excessive neutrophil recruitment at inflammatory sites by antagonizing the association of CXCL8 with glycosaminoglycans on vascular endothelium. Has a role in osteogenesis and bone remodeling. Inhibits BMP2-dependent differentiation of mesenchymal stem cell to osteoblasts. Protects against bone erosion during inflammation by inhibiting TNFSF11/RANKL-dependent osteoclast activation. The polypeptide is Tumor necrosis factor-inducible gene 6 protein (TNFAIP6) (Homo sapiens (Human)).